We begin with the raw amino-acid sequence, 108 residues long: Circadian clock oscillator protein KaiB (108 aa).

Belongs to the KaiB family. In terms of assembly, may undergo a major conformational rearrangment; in the free state forms homooligomers. When bound to KaiC switches to a monomeric thioredoxin-fold (KaiB(fs)). The active oscillator complex is probably KaiC(6):KaiB(6).

Component of the KaiBC clock protein complex, which constitutes the main circadian regulator in cyanobacteria; it may modify the ATPase activity of KaiC. In terms of biological role, may be a metamorphic protein which reversibly switches between an inactive tetrameric fold and a rare, thioredoxin-like monomeric fold (KaiB(fs)). KaiB(fs) binds phospho-KaiC, and perhaps clock output effectors. In Prochlorococcus marinus (strain MIT 9515), this protein is Circadian clock oscillator protein KaiB.